Here is a 228-residue protein sequence, read N- to C-terminus: UPF0173 metal-dependent hydrolase lmo1577 (228 aa).

This sequence belongs to the UPF0173 family.

The polypeptide is UPF0173 metal-dependent hydrolase lmo1577 (Listeria monocytogenes serovar 1/2a (strain ATCC BAA-679 / EGD-e)).